The primary structure comprises 109 residues: Large ribosomal subunit protein uL24 (109 aa).

This sequence belongs to the universal ribosomal protein uL24 family. Part of the 50S ribosomal subunit.

Its function is as follows. One of two assembly initiator proteins, it binds directly to the 5'-end of the 23S rRNA, where it nucleates assembly of the 50S subunit. One of the proteins that surrounds the polypeptide exit tunnel on the outside of the subunit. The chain is Large ribosomal subunit protein uL24 from Rickettsia africae (strain ESF-5).